Consider the following 297-residue polypeptide: Protease HtpX homolog (297 aa).

A run of 2 helical transmembrane segments spans residues 14-34 and 39-59; these read VILLFAFFVLLVVIGAAAGYL and YQLGAAFALIIGAIYAFSMIF. H143 lines the Zn(2+) pocket. E144 is an active-site residue. Residue H147 coordinates Zn(2+). 2 helical membrane passes run 158-178 and 193-213; these read IAVALASAVTLISSIGGRMMW and GFGAIMLIFSILSLILAPLAA. E225 provides a ligand contact to Zn(2+).

It belongs to the peptidase M48B family. Zn(2+) serves as cofactor.

The protein resides in the cell membrane. This is Protease HtpX homolog from Streptococcus equi subsp. equi (strain 4047).